The chain runs to 949 residues: Inactive atromentin synthetase invA3 (949 aa).

The interval 38–460 (RAVSQYPNHE…SGRIKDTVVV (423 aa)) is adenylation (A) domain. The region spanning 592-670 (ALSTETEKTL…NLAKYVDSLV (79 aa)) is the Carrier domain. The thiolation and peptide carrier (T) domain stretch occupies residues 597 to 667 (TEKTLAGIYA…VISNLAKYVD (71 aa)). Ser-629 is subject to O-(pantetheine 4'-phosphoryl)serine. The interval 693-934 (PIFMVHPGMA…YTLMDFDHVA (242 aa)) is thioesterase (TE) domain.

It belongs to the ATP-dependent AMP-binding enzyme family.

Inactive atromentin synthetase homolog. While the invA3 adenylation (A) domain is capable of adenylating 4-hydroxyphenylpyruvate (4-HPP), the invA3 enzyme is inactive because of its non-functional thioesterase (TE) domain. In Paxillus involutus (Naked brimcap), this protein is Inactive atromentin synthetase invA3 (invA3).